Reading from the N-terminus, the 2604-residue chain is Probable polyketide synthase 17 (2604 aa).

Residues 11–433 form the Ketosynthase family 3 (KS3) domain; that stretch reads NDDIAIIGMG…GSNCHMILSE (423 aa). Residues C179, H316, and H356 each act as for beta-ketoacyl synthase activity in the active site. The interval 631–664 is acyl/malonyl transferases; sequence GISPSIVVGHSFGEIPSALFSDVISLETAVKIVY. S641 functions as the For acyl/malonyl transferase activity in the catalytic mechanism. An N-terminal hotdog fold region spans residues 937–1057; that stretch reads NNLLGHDQFA…GRIGLFKHNP (121 aa). A PKS/mFAS DH domain is found at 937–1216; it reads NNLLGHDQFA…CTSLIRLKKQ (280 aa). H968 serves as the catalytic Proton acceptor; for dehydratase activity. Positions 1072–1216 are C-terminal hotdog fold; it reads SFTTLTKSEV…CTSLIRLKKQ (145 aa). The active-site Proton donor; for dehydratase activity is D1132. A disordered region spans residues 1357–1407; that stretch reads GESEHFSPSNPSSPNDTPRNNSNNCSSKNNAASSDDADDDTNNEETINQLN. Positions 1363–1390 are enriched in low complexity; that stretch reads SPSNPSSPNDTPRNNSNNCSSKNNAASS. The 78-residue stretch at 2507–2584 folds into the Carrier domain; that stretch reads GDSGSTQAKV…SIIQRISSKS (78 aa). Position 2544 is an O-(pantetheine 4'-phosphoryl)serine (S2544). Positions 2581-2597 are enriched in low complexity; that stretch reads SSKSTSTSTPNPTNTSK. The tract at residues 2581–2604 is disordered; that stretch reads SSKSTSTSTPNPTNTSKQTATKKT.

The cofactor is pantetheine 4'-phosphate.

Its function is as follows. Probable polyketide synthase. This Dictyostelium discoideum (Social amoeba) protein is Probable polyketide synthase 17 (pks17).